The sequence spans 347 residues: Metacaspase-2 (347 aa).

Positions 1-55 (MCSLITQLCDAGQLADYVGLGWLNAVSSQPYLVQALGLQPPPRRVDVDAAFRDAK) are excised as a propeptide. Positions 1 to 70 (MCSLITQLCD…QPWVATPLPG (70 aa)) are regulates substrate access to the active site. His-158 is an active-site residue. Ca(2+) is bound by residues Asp-173, Asp-189, and Asp-190. Cys-213 is a catalytic residue. Residue Asp-220 participates in Ca(2+) binding.

Belongs to the peptidase C14B family. As to quaternary structure, monomer. Auto-proteolytic cleavage of the propeptide after Lys-55 and between the large and small subunits after Lys-268 is required for catalytic activity towards large protein substrates but is dispensable towards small oligopeptide substrates. After processing, the propeptide and the large and small subunits remain associated by non-covalent bonds. In vivo, the unprocessed enzyme appears to be the predominant form.

Its subcellular location is the recycling endosome. Its activity is regulated as follows. Activated by Ca(2+). In response to calcium binding, the 280-loop, a disordered loop consisting of residues 269-275, undergoes a conformational change which stabilizes substrates in the active site. The binding to the substrate triggers the release of the N-terminal region resulting in the activation of the enzyme. Proteolytic cleavage is required for catalytic activity towards large protein substrates. Cysteine protease that cleaves specifically after arginine or lysine residues. In Trypanosoma brucei brucei (strain 927/4 GUTat10.1), this protein is Metacaspase-2.